Consider the following 399-residue polypeptide: Succinate--CoA ligase [ADP-forming] subunit beta (399 aa).

The 246-residue stretch at 9 to 254 (KALLREFGVP…ESEEDAKEIE (246 aa)) folds into the ATP-grasp domain. ATP-binding positions include K46, 53–55 (GRG), E109, S112, and E117. Residues N209 and D223 each coordinate Mg(2+). Residues N274 and 331-333 (GIM) contribute to the substrate site.

Belongs to the succinate/malate CoA ligase beta subunit family. Heterotetramer of two alpha and two beta subunits. It depends on Mg(2+) as a cofactor.

It carries out the reaction succinate + ATP + CoA = succinyl-CoA + ADP + phosphate. The catalysed reaction is GTP + succinate + CoA = succinyl-CoA + GDP + phosphate. Its pathway is carbohydrate metabolism; tricarboxylic acid cycle; succinate from succinyl-CoA (ligase route): step 1/1. Functionally, succinyl-CoA synthetase functions in the citric acid cycle (TCA), coupling the hydrolysis of succinyl-CoA to the synthesis of either ATP or GTP and thus represents the only step of substrate-level phosphorylation in the TCA. The beta subunit provides nucleotide specificity of the enzyme and binds the substrate succinate, while the binding sites for coenzyme A and phosphate are found in the alpha subunit. The protein is Succinate--CoA ligase [ADP-forming] subunit beta of Nitrobacter winogradskyi (strain ATCC 25391 / DSM 10237 / CIP 104748 / NCIMB 11846 / Nb-255).